A 118-amino-acid polypeptide reads, in one-letter code: Large ribosomal subunit protein uL22 (118 aa).

The protein belongs to the universal ribosomal protein uL22 family. As to quaternary structure, part of the 50S ribosomal subunit.

This protein binds specifically to 23S rRNA; its binding is stimulated by other ribosomal proteins, e.g. L4, L17, and L20. It is important during the early stages of 50S assembly. It makes multiple contacts with different domains of the 23S rRNA in the assembled 50S subunit and ribosome. Its function is as follows. The globular domain of the protein is located near the polypeptide exit tunnel on the outside of the subunit, while an extended beta-hairpin is found that lines the wall of the exit tunnel in the center of the 70S ribosome. The sequence is that of Large ribosomal subunit protein uL22 from Prosthecochloris aestuarii (strain DSM 271 / SK 413).